A 637-amino-acid polypeptide reads, in one-letter code: 1-deoxy-D-xylulose-5-phosphate synthase (637 aa).

Thiamine diphosphate contacts are provided by residues His73 and 113-115; that span reads SHA. Asp144 contributes to the Mg(2+) binding site. Thiamine diphosphate is bound by residues 145-146, Asn174, Tyr285, and Glu366; that span reads GA. Asn174 provides a ligand contact to Mg(2+).

The protein belongs to the transketolase family. DXPS subfamily. As to quaternary structure, homodimer. The cofactor is Mg(2+). It depends on thiamine diphosphate as a cofactor.

It carries out the reaction D-glyceraldehyde 3-phosphate + pyruvate + H(+) = 1-deoxy-D-xylulose 5-phosphate + CO2. It participates in metabolic intermediate biosynthesis; 1-deoxy-D-xylulose 5-phosphate biosynthesis; 1-deoxy-D-xylulose 5-phosphate from D-glyceraldehyde 3-phosphate and pyruvate: step 1/1. Catalyzes the acyloin condensation reaction between C atoms 2 and 3 of pyruvate and glyceraldehyde 3-phosphate to yield 1-deoxy-D-xylulose-5-phosphate (DXP). This is 1-deoxy-D-xylulose-5-phosphate synthase from Streptomyces griseus subsp. griseus (strain JCM 4626 / CBS 651.72 / NBRC 13350 / KCC S-0626 / ISP 5235).